Here is a 455-residue protein sequence, read N- to C-terminus: Gamma-glutamyl phosphate reductase (455 aa).

It belongs to the gamma-glutamyl phosphate reductase family.

It localises to the cytoplasm. The catalysed reaction is L-glutamate 5-semialdehyde + phosphate + NADP(+) = L-glutamyl 5-phosphate + NADPH + H(+). It functions in the pathway amino-acid biosynthesis; L-proline biosynthesis; L-glutamate 5-semialdehyde from L-glutamate: step 2/2. In terms of biological role, catalyzes the NADPH-dependent reduction of L-glutamate 5-phosphate into L-glutamate 5-semialdehyde and phosphate. The product spontaneously undergoes cyclization to form 1-pyrroline-5-carboxylate. In Synechococcus sp. (strain JA-3-3Ab) (Cyanobacteria bacterium Yellowstone A-Prime), this protein is Gamma-glutamyl phosphate reductase.